The following is a 245-amino-acid chain: 1-(5-phosphoribosyl)-5-[(5-phosphoribosylamino)methylideneamino] imidazole-4-carboxamide isomerase (245 aa).

The Proton acceptor role is filled by aspartate 7. Aspartate 129 acts as the Proton donor in catalysis.

It belongs to the HisA/HisF family.

Its subcellular location is the cytoplasm. It catalyses the reaction 1-(5-phospho-beta-D-ribosyl)-5-[(5-phospho-beta-D-ribosylamino)methylideneamino]imidazole-4-carboxamide = 5-[(5-phospho-1-deoxy-D-ribulos-1-ylimino)methylamino]-1-(5-phospho-beta-D-ribosyl)imidazole-4-carboxamide. It functions in the pathway amino-acid biosynthesis; L-histidine biosynthesis; L-histidine from 5-phospho-alpha-D-ribose 1-diphosphate: step 4/9. This Shewanella oneidensis (strain ATCC 700550 / JCM 31522 / CIP 106686 / LMG 19005 / NCIMB 14063 / MR-1) protein is 1-(5-phosphoribosyl)-5-[(5-phosphoribosylamino)methylideneamino] imidazole-4-carboxamide isomerase.